The primary structure comprises 503 residues: ATP synthase subunit alpha, chloroplastic (503 aa).

170–177 (GDRQTGKT) contributes to the ATP binding site.

It belongs to the ATPase alpha/beta chains family. F-type ATPases have 2 components, CF(1) - the catalytic core - and CF(0) - the membrane proton channel. CF(1) has five subunits: alpha(3), beta(3), gamma(1), delta(1), epsilon(1). CF(0) has four main subunits: a, b, b' and c.

It localises to the plastid. The protein resides in the chloroplast thylakoid membrane. It carries out the reaction ATP + H2O + 4 H(+)(in) = ADP + phosphate + 5 H(+)(out). Functionally, produces ATP from ADP in the presence of a proton gradient across the membrane. The alpha chain is a regulatory subunit. This chain is ATP synthase subunit alpha, chloroplastic, found in Trieres chinensis (Marine centric diatom).